The following is a 109-amino-acid chain: U26-theraphotoxin-Cg1b (109 aa).

The signal sequence occupies residues 1-18 (MNTIIPLLLLSLLITVYA). Positions 19 to 67 (YALEDGNKEEMQDIAESEFEASNEMLQLAHLLEADRAETEEDRNSRQKR) are excised as a propeptide. 3 disulfide bridges follow: Cys-68/Cys-83, Cys-75/Cys-88, and Cys-82/Cys-103.

This sequence belongs to the neurotoxin 14 (magi-1) family. 07 (Jztx-56) subfamily. Expressed by the venom gland.

The protein resides in the secreted. Probable ion channel inhibitor. The protein is U26-theraphotoxin-Cg1b of Chilobrachys guangxiensis (Chinese earth tiger tarantula).